A 288-amino-acid chain; its full sequence is MKGSTVHTKWQAYCRLMRIDKPIGSLLLLWPTLWALWLAGRGIPEAKILVVFVLGVFFMRAAGCVVNDYADRHIDGFVKRTASRPLPSGTISEKESKILFVVLILLSFGLVLTLNSMTIWLSLAALALAWIYPFMKRVTHLPQVVLGAAFGWSIPMGFAAVSESLPLVCWLLLLANICWTVAYDTQYAMVDRDDDLRIGVKSTAILFGQHDKLIIGLLQLATLLLMVAIGWLMNLGGAFYWSILLAGALFTHQQKMIAQREREPCFRAFLNNNYVGLILFLGILISYW.

Transmembrane regions (helical) follow at residues 23-43 (IGSLLLLWPTLWALWLAGRGI), 46-66 (AKILVVFVLGVFFMRAAGCVV), 98-118 (ILFVVLILLSFGLVLTLNSMT), 141-161 (LPQVVLGAAFGWSIPMGFAAV), 163-183 (ESLPLVCWLLLLANICWTVAY), 213-233 (LIIGLLQLATLLLMVAIGWLM), 234-254 (NLGGAFYWSILLAGALFTHQQ), and 268-288 (AFLNNNYVGLILFLGILISYW).

This sequence belongs to the UbiA prenyltransferase family. It depends on Mg(2+) as a cofactor.

Its subcellular location is the cell inner membrane. The enzyme catalyses all-trans-octaprenyl diphosphate + 4-hydroxybenzoate = 4-hydroxy-3-(all-trans-octaprenyl)benzoate + diphosphate. Its pathway is cofactor biosynthesis; ubiquinone biosynthesis. Catalyzes the prenylation of para-hydroxybenzoate (PHB) with an all-trans polyprenyl group. Mediates the second step in the final reaction sequence of ubiquinone-8 (UQ-8) biosynthesis, which is the condensation of the polyisoprenoid side chain with PHB, generating the first membrane-bound Q intermediate 3-octaprenyl-4-hydroxybenzoate. In Yersinia pseudotuberculosis serotype O:1b (strain IP 31758), this protein is 4-hydroxybenzoate octaprenyltransferase.